A 391-amino-acid chain; its full sequence is Elongation factor Tu 1 (391 aa).

Residues 10–201 (KLHVNIGTIG…EVDRYIPTPE (192 aa)) form the tr-type G domain. The interval 19–26 (GHVDHGKT) is G1. 19 to 26 (GHVDHGKT) provides a ligand contact to GTP. A Mg(2+)-binding site is contributed by T26. The tract at residues 55 to 59 (GITIS) is G2. Positions 76–79 (DCPG) are G3. GTP contacts are provided by residues 76–80 (DCPGH) and 131–134 (NKVD). Residues 131–134 (NKVD) form a G4 region. Positions 169–171 (SAL) are G5.

Belongs to the TRAFAC class translation factor GTPase superfamily. Classic translation factor GTPase family. EF-Tu/EF-1A subfamily. As to quaternary structure, monomer.

The protein resides in the cytoplasm. The catalysed reaction is GTP + H2O = GDP + phosphate + H(+). Functionally, GTP hydrolase that promotes the GTP-dependent binding of aminoacyl-tRNA to the A-site of ribosomes during protein biosynthesis. The sequence is that of Elongation factor Tu 1 from Bartonella bacilliformis (strain ATCC 35685 / KC583 / Herrer 020/F12,63).